Here is a 346-residue protein sequence, read N- to C-terminus: Histone PARylation factor 1 (346 aa).

M1 carries the post-translational modification N-acetylmethionine. N6-acetyllysine occurs at positions 19, 186, and 233. D235 bears the PolyADP-ribosyl aspartic acid mark. Y238 is modified (ADP-ribosyltyrosine). E240 bears the PolyADP-ribosyl glutamic acid mark. Residues 242–346 (PETDADLKRI…SEENIDQLAG (105 aa)) form an interaction with PARP1 region. E284 serves as the catalytic Proton donor.

The protein belongs to the HPF1 family. As to quaternary structure, interacts with PARP1 (via the PARP catalytic domain). Interacts with PARP2 (via the PARP catalytic domain). Interacts with core nucleosomes in a PARP1- and PARP2-dependent manner.

It is found in the chromosome. It localises to the nucleus. In terms of biological role, cofactor for serine ADP-ribosylation that confers serine specificity on PARP1 and PARP2 and plays a key role in DNA damage response. Initiates the repair of double-strand DNA breaks: recruited to DNA damage sites by PARP1 and PARP2 and switches the amino acid specificity of PARP1 and PARP2 from aspartate or glutamate to serine residues, licensing serine ADP-ribosylation of target proteins. Serine ADP-ribosylation of target proteins, such as histones, promotes decompaction of chromatin and the recruitment of repair factors leading to the reparation of DNA strand breaks. Serine ADP-ribosylation of proteins constitutes the primary form of ADP-ribosylation of proteins in response to DNA damage. HPF1 acts by completing the active site of PARP1 and PARP2: forms a composite active site composed of residues from HPF1 and PARP1 or PARP2. While HPF1 promotes the initiation of serine ADP-ribosylation, it restricts the polymerase activity of PARP1 and PARP2 in order to limit the length of poly-ADP-ribose chains. HPF1 also promotes tyrosine ADP-ribosylation, probably by conferring tyrosine specificity on PARP1. The chain is Histone PARylation factor 1 from Mus musculus (Mouse).